Consider the following 291-residue polypeptide: ATP synthase gamma chain (291 aa).

This sequence belongs to the ATPase gamma chain family. As to quaternary structure, F-type ATPases have 2 components, CF(1) - the catalytic core - and CF(0) - the membrane proton channel. CF(1) has five subunits: alpha(3), beta(3), gamma(1), delta(1), epsilon(1). CF(0) has three main subunits: a, b and c.

It localises to the cell inner membrane. In terms of biological role, produces ATP from ADP in the presence of a proton gradient across the membrane. The gamma chain is believed to be important in regulating ATPase activity and the flow of protons through the CF(0) complex. This is ATP synthase gamma chain from Rhodopseudomonas palustris (strain BisB5).